A 424-amino-acid chain; its full sequence is Histidine--tRNA ligase (424 aa).

The protein belongs to the class-II aminoacyl-tRNA synthetase family. In terms of assembly, homodimer.

The protein localises to the cytoplasm. It catalyses the reaction tRNA(His) + L-histidine + ATP = L-histidyl-tRNA(His) + AMP + diphosphate + H(+). The sequence is that of Histidine--tRNA ligase from Shigella dysenteriae serotype 1 (strain Sd197).